We begin with the raw amino-acid sequence, 250 residues long: 5'-nucleotidase SurE (250 aa).

Residues Asp8, Asp9, Ser39, and Asn91 each coordinate a divalent metal cation.

The protein belongs to the SurE nucleotidase family. The cofactor is a divalent metal cation.

It localises to the cytoplasm. The catalysed reaction is a ribonucleoside 5'-phosphate + H2O = a ribonucleoside + phosphate. Functionally, nucleotidase that shows phosphatase activity on nucleoside 5'-monophosphates. The chain is 5'-nucleotidase SurE from Leptospira interrogans serogroup Icterohaemorrhagiae serovar copenhageni (strain Fiocruz L1-130).